We begin with the raw amino-acid sequence, 403 residues long: Acetyl-CoA acetyltransferase 2 (403 aa).

The Acyl-thioester intermediate role is filled by cysteine 97. Lysine 237 contributes to the CoA binding site. Alanine 254 is a binding site for K(+). CoA is bound at residue serine 258. K(+) is bound at residue valine 355. Active-site proton acceptor residues include histidine 359 and cysteine 389.

The protein belongs to the thiolase-like superfamily. Thiolase family. Expressed in root tips, emerging leaves, young leaves, stems, and anthers at the microspore stage.

Its subcellular location is the cytoplasm. The protein localises to the peroxisome. The catalysed reaction is 2 acetyl-CoA = acetoacetyl-CoA + CoA. The protein operates within metabolic intermediate biosynthesis; (R)-mevalonate biosynthesis; (R)-mevalonate from acetyl-CoA: step 1/3. Its function is as follows. Catalyzes the condensation of two molecules of acetyl-CoA to produce acetoacetyl-CoA. Generates the bulk of the acetoacetyl-CoA precursor required for the cytosol-localized, mevalonate-derived isoprenoid biosynthesis. The generated isoprenoids are required for normal growth and development. Essential protein during embryogenesis. The sequence is that of Acetyl-CoA acetyltransferase 2 from Arabidopsis thaliana (Mouse-ear cress).